A 392-amino-acid polypeptide reads, in one-letter code: MIDEKDKSYLEEKVKQASNILPQKIVEDLKNLISNKEVLVTRDEIDKIFDLAIKEYSEGLIAPGEAIGIVAAQSVGEPGTQMTLRTFHFAGIRELNVTLGLPRLIEIVDAKKVPSTPMMTIYLTDEYKHDKEKALEVARKLEYTKIENVVSSTSIDIASMSIILQLDNEMLKDKGVTVDDVKKAINRLKLGEFVIDESEGNTLNISFANIDSIAALFKLRDKILNTKIKGIKGIKRAIVQKKGDEYIILTDGSNLSGVLSVKGVDIAKVETNNIREIEEVFGIEAAREIIIREISKVLAEQGLDVDMRHILLVADVMTRTGVVRQIGRHGVTGEKNSVLARAAFEVTVKHLLDAAARGDVEEFKGVVENIIIGHPIKLGTGMVELTMRPILR.

It belongs to the RNA polymerase beta' chain family. Part of the RNA polymerase complex.

The protein resides in the cytoplasm. The enzyme catalyses RNA(n) + a ribonucleoside 5'-triphosphate = RNA(n+1) + diphosphate. Functionally, DNA-dependent RNA polymerase (RNAP) catalyzes the transcription of DNA into RNA using the four ribonucleoside triphosphates as substrates. Forms part of the jaw domain. This chain is DNA-directed RNA polymerase subunit Rpo1C, found in Saccharolobus islandicus (strain Y.N.15.51 / Yellowstone #2) (Sulfolobus islandicus).